The chain runs to 188 residues: Thymidine kinase (188 aa).

17–24 contributes to the ATP binding site; that stretch reads GPMFAGKT. The Proton acceptor role is filled by E92. F121 serves as a coordination point for substrate. The Zn(2+) site is built by C146 and C149. Residue 166–170 participates in substrate binding; it reads LILAG. Zn(2+)-binding residues include C179 and C182.

Belongs to the thymidine kinase family.

The catalysed reaction is thymidine + ATP = dTMP + ADP + H(+). Phosphorylates thymidine. ASFV replicates in the cytoplasm of infected cells and contains genes encoding a number of enzymes needed for DNA synthesis, including thymidine kinase. Important for growth in swine macrophages in vitro and is a virus virulence factor in swine. The sequence is that of Thymidine kinase from African swine fever virus (isolate Tick/South Africa/Pretoriuskop Pr4/1996) (ASFV).